Here is a 284-residue protein sequence, read N- to C-terminus: Formamidopyrimidine-DNA glycosylase (284 aa).

Pro-2 acts as the Schiff-base intermediate with DNA in catalysis. Glu-3 functions as the Proton donor in the catalytic mechanism. Lys-58 acts as the Proton donor; for beta-elimination activity in catalysis. Residues His-97, Arg-120, and Arg-165 each contribute to the DNA site. Residues 250-284 (FVYDRAGEPCKVCGTPVRQIVQGQRSTFYCTHCQH) form an FPG-type zinc finger. Arg-274 functions as the Proton donor; for delta-elimination activity in the catalytic mechanism.

Belongs to the FPG family. In terms of assembly, monomer. Requires Zn(2+) as cofactor.

It carries out the reaction Hydrolysis of DNA containing ring-opened 7-methylguanine residues, releasing 2,6-diamino-4-hydroxy-5-(N-methyl)formamidopyrimidine.. The enzyme catalyses 2'-deoxyribonucleotide-(2'-deoxyribose 5'-phosphate)-2'-deoxyribonucleotide-DNA = a 3'-end 2'-deoxyribonucleotide-(2,3-dehydro-2,3-deoxyribose 5'-phosphate)-DNA + a 5'-end 5'-phospho-2'-deoxyribonucleoside-DNA + H(+). Its function is as follows. Involved in base excision repair of DNA damaged by oxidation or by mutagenic agents. Acts as a DNA glycosylase that recognizes and removes damaged bases. Has a preference for oxidized purines, such as 7,8-dihydro-8-oxoguanine (8-oxoG). Has AP (apurinic/apyrimidinic) lyase activity and introduces nicks in the DNA strand. Cleaves the DNA backbone by beta-delta elimination to generate a single-strand break at the site of the removed base with both 3'- and 5'-phosphates. This is Formamidopyrimidine-DNA glycosylase from Cupriavidus pinatubonensis (strain JMP 134 / LMG 1197) (Cupriavidus necator (strain JMP 134)).